An 803-amino-acid polypeptide reads, in one-letter code: Xylosyltransferase sqv-6 (803 aa).

Topologically, residues valine 3–histidine 13 are cytoplasmic. Residues tyrosine 14–asparagine 34 form a helical; Signal-anchor for type II membrane protein membrane-spanning segment. Residues serine 35–arginine 803 lie on the Lumenal side of the membrane. Cysteine 63 and cysteine 91 are joined by a disulfide. Residues asparagine 95, asparagine 175, and asparagine 224 are each glycosylated (N-linked (GlcNAc...) asparagine). Disulfide bonds link cysteine 107–cysteine 446, cysteine 465–cysteine 479, and cysteine 467–cysteine 477. A WSC domain is found at isoleucine 115–aspartate 209. UDP-alpha-D-xylose-binding positions include aspartate 265 and threonine 294–tryptophan 296. The N-linked (GlcNAc...) asparagine glycan is linked to asparagine 326. Aspartate 399–tryptophan 400 is a UDP-alpha-D-xylose binding site. Residues serine 480 and arginine 506–lysine 507 each bind UDP-alpha-D-xylose. Asparagine 615 and asparagine 718 each carry an N-linked (GlcNAc...) asparagine glycan. Cysteine 769 and cysteine 775 are joined by a disulfide.

The protein belongs to the glycosyltransferase 14 family. XylT subfamily. Requires a divalent metal cation as cofactor.

The protein localises to the endoplasmic reticulum membrane. Its subcellular location is the golgi apparatus membrane. It carries out the reaction UDP-alpha-D-xylose + L-seryl-[protein] = 3-O-(beta-D-xylosyl)-L-seryl-[protein] + UDP + H(+). It functions in the pathway glycan metabolism; chondroitin sulfate biosynthesis. It participates in glycan metabolism; heparan sulfate biosynthesis. Its function is as follows. Catalyzes the first step in biosynthesis of glycosaminoglycan. Transfers D-xylose from UDP-D-xylose to specific serine residues of the core protein. The protein is Xylosyltransferase sqv-6 of Caenorhabditis briggsae.